Consider the following 897-residue polypeptide: Schlafen family member 13 (897 aa).

The n'-domain region stretch occupies residues 2–355 (EANHCSLGVY…WVEKMMDADP (354 aa)). Residues Glu208 and Glu213 contribute to the active site. Residues His284, Cys286, and Cys321 each coordinate Zn(2+). 599–606 (GLPGSGKT) is a binding site for ATP.

The protein belongs to the Schlafen family. Subgroup III subfamily. Requires Mg(2+) as cofactor.

Its subcellular location is the cytoplasm. Functionally, endoribonuclease that cleaves tRNAs and rRNAs. Cleaves tRNAs 11 nucleotides from the 3'-terminus at the acceptor stem. Does not act on tRNA(Sec). Able to restrict HIV-1 virus replication; ability to inhibit HIV-1 replication is dependent on endoribonuclease activity. This Homo sapiens (Human) protein is Schlafen family member 13.